The chain runs to 509 residues: Carboxysome shell carbonic anhydrase (509 aa).

Position 170 (cysteine 170) interacts with Zn(2+). Residue aspartate 172 is the Proton acceptor of the active site. Histidine 238 and cysteine 249 together coordinate Zn(2+).

This sequence belongs to the beta-class carbonic anhydrase family. CsoSCA subfamily. Homodimer. Requires Zn(2+) as cofactor.

The protein localises to the carboxysome. It catalyses the reaction hydrogencarbonate + H(+) = CO2 + H2O. Reversible hydration of carbon dioxide. Essential for photosynthetic carbon dioxide fixation, supplies CO(2) to RuBisCO (ribulose bisphosphate carboxylase, cbbL-cbbS) in the carboxysome. There are estimated to be 29 CsoSCA oligomers per carboxysome. This Prochlorococcus marinus subsp. pastoris (strain CCMP1986 / NIES-2087 / MED4) protein is Carboxysome shell carbonic anhydrase.